Here is a 401-residue protein sequence, read N- to C-terminus: Inactive leucine-rich repeat receptor-like protein kinase CORYNE (401 aa).

The signal sequence occupies residues 1 to 33 (MKQRRRRNGCSSSNTISLLLLFFLVFFSRTSTS). The Extracellular portion of the chain corresponds to 34–62 (TSCRRRTVKHLSTTSTSSTPLESRITSKV). A helical transmembrane segment spans residues 63–83 (IVISIVSGILTGLVSALVLAF). Residues 84–401 (LVRSIVKFMK…VHMLTQLHSF (318 aa)) lie on the Cytoplasmic side of the membrane. The 284-residue stretch at 118-401 (SNGIQLLGSD…VHMLTQLHSF (284 aa)) folds into the Protein kinase domain. ATP is bound by residues 124 to 132 (LGSDLNGKY) and lysine 146.

Belongs to the protein kinase superfamily. Ser/Thr protein kinase family. In terms of assembly, self-interacts. Parts of a tetrameric complex made of two CLV2/CRN heterodimers that can interact with CLV3 and CLE peptides. CLV2/CRN heterodimer interacts with CLV1 homodimers. Interacts with CLV1 and CLV2. CLV2/CRN heterodimer can interact with BAM3. In terms of tissue distribution, present in roots, stems, leaves, inflorescence, flowers and siliques. Mostly expressed in shoot tips and, to a lesser extent, in young organs and roots. Also expressed in the inner tissues of the proximal root meristem. Expressed in the vascular cylinder of root tips, mostly in phloem poles.

The protein localises to the cell membrane. It localises to the endoplasmic reticulum membrane. Functionally, involved in the perception of CLV3 and CLV3-like (CLE) peptides, that act as extracellular signals regulating meristem maintenance. Modulates root, shoot and flower apical meristem maintenance and floral organ development regulation, probably via CLAVATA (CLV)-like pathways involving at least CLV3 and CLE19. In complex with CLV2, perceives secreted CLV3-like effector proteins from plant-parasitic cyst nematodes as ligand mimics of the plant CLE signaling pathway. This recognition is required for proper feeding structure (syncytium) development and ultimately successful nematode infection. CLE14 perception by CLV2/CRN complex triggers root meristem differentiation. Required for the sensing of the root CLE peptides (e.g. CLE8, CLE9/CLE10, CLE11, CLE13, CLE14, CLE16, CLE17, CLE18, CLE20, CLE21, CLE25, CLE26, CLE40, CLE41/CLE44 and CLE45), which also involves CLV2 and leads to root growth regulation, mostly in the phloem and protophloem. Promotes the accumulation of BAM3, especially at later stages of protophloem development. The chain is Inactive leucine-rich repeat receptor-like protein kinase CORYNE from Arabidopsis thaliana (Mouse-ear cress).